We begin with the raw amino-acid sequence, 2890 residues long: Bifunctional DNA-directed RNA polymerase subunit beta-beta' (2890 aa).

A DNA-directed RNA polymerase subunit beta region spans residues 1-1377 (MSKKIPLKNR…DINIFGDEMD (1377 aa)). A DNA-directed RNA polymerase subunit beta' region spans residues 1384 to 2890 (PIVIKEDDRP…LRTIEDSPKI (1507 aa)). Cys1449, Cys1451, Cys1465, and Cys1468 together coordinate Zn(2+). Residues Asp1849, Asp1851, and Asp1853 each coordinate Mg(2+). The Zn(2+) site is built by Cys2179, Cys2253, Cys2260, and Cys2263.

In the N-terminal section; belongs to the RNA polymerase beta chain family. It in the C-terminal section; belongs to the RNA polymerase beta' chain family. In terms of assembly, the RNAP catalytic core consists of 2 alpha, 1 beta/beta' and 1 omega subunit. When a sigma factor is associated with the core the holoenzyme is formed, which can initiate transcription. Mg(2+) serves as cofactor. It depends on Zn(2+) as a cofactor.

It catalyses the reaction RNA(n) + a ribonucleoside 5'-triphosphate = RNA(n+1) + diphosphate. In terms of biological role, DNA-dependent RNA polymerase catalyzes the transcription of DNA into RNA using the four ribonucleoside triphosphates as substrates. The chain is Bifunctional DNA-directed RNA polymerase subunit beta-beta' (rpoBC) from Helicobacter acinonychis (strain Sheeba).